The following is a 606-amino-acid chain: Mitogen-activated protein kinase kinase kinase 7 (606 aa).

The segment at 1-300 (MSTASAASSS…FPGADEPLQY (300 aa)) is interaction with MAPK8IP1. The region spanning 36-291 (IEVEEVVGRG…KIMTHLMRYF (256 aa)) is the Protein kinase domain. ATP is bound by residues 42–50 (VGRGAFGVV) and K63. K72 is covalently cross-linked (Glycyl lysine isopeptide (Lys-Gly) (interchain with G-Cter in ubiquitin)). Catalysis depends on D156, which acts as the Proton acceptor. K158 is covalently cross-linked (Glycyl lysine isopeptide (Lys-Gly) (interchain with G-Cter in ubiquitin)). A phosphothreonine; by autocatalysis mark is found at T184 and T187. Phosphoserine; by autocatalysis is present on S192. Residue K209 forms a Glycyl lysine isopeptide (Lys-Gly) (interchain with G-Cter in ubiquitin) linkage. Disordered regions lie at residues 301–338 (PCQY…MEQV) and 354–391 (KNQA…MSAD). The segment covering 306-338 (DEGQSNSATSTGSFMDIASTNTSNKSDTNMEQV) has biased composition (polar residues). A compositionally biased stretch (low complexity) spans 361-375 (SDSGRLSLGASRGSS). Phosphoserine occurs at positions 367, 389, and 439. Residues 443-452 (LTVTGTEPGQ) show a composition bias toward polar residues. A disordered region spans residues 443-492 (LTVTGTEPGQVSSRSSSPSVRMITTSGPTSEKPARSLPWTPDDSTDTNGS). Low complexity predominate over residues 453–463 (VSSRSSSPSVR). Position 455 is a phosphoserine (S455).

This sequence belongs to the protein kinase superfamily. STE Ser/Thr protein kinase family. MAP kinase kinase kinase subfamily. Can form homodimer. Binds both upstream activators and downstream substrates in multimolecular complexes. Interacts with TAB1/MAP3K7IP1, TAB2/MAP3K7IP2 and TAB3/MAP3K7IP3. Identified in the TRIKA2 complex composed of MAP3K7/TAK1, TAB1/MAP3K7IP1 and TAB2/MAP3K7IP2. Interacts with PPM1L and PPM1B/PP2CB. Interaction with PP2A and PPP6C leads to its repressed activity. Interacts with TRAF6 and TAB1/MAP3K7IP1; during IL-1 signaling. Interacts with TAOK1 and TAOK2; interaction with TAOK2 interferes with MAP3K7 interaction with IKKA, thus preventing NF-kappa-B activation. Interacts with DYNC2I2 (via WD domains). Interacts with CYLD and RBCK1. Interacts with TGFBR1; induces MAP3K7/TAK1 activation by TRAF6. Interacts with MAPK8IP1 and SMAD6. Interacts with isoform 1 of VRK2. Interacts with DAB2; the interaction is induced by TGF-beta stimulation and may mediate TGF-beta stimulated JNK activation. Interacts with TRIM5. Part of a complex containing ITCH, NDFIP1 and MAP3K7. Interacts with PLEKHM1 (via N- and C-terminus). Found in a complex with SH3RF1, RAC2, MAP2K7/MKK7, MAPK8IP1/JIP1, MAPK8/JNK1 and MAPK9/JNK2. Interacts with SASH1. Interacts with RIPK1. Mg(2+) is required as a cofactor. Post-translationally, association with TAB1/MAP3K7IP1 promotes autophosphorylation at Ser-192 and subsequent activation. Association with TAB2/MAP3K7IP2, itself associated with free unanchored Lys-63 polyubiquitin chain, promotes autophosphorylation and subsequent activation of MAP3K7. Dephosphorylation at Ser-192 by PPM1B/PP2CB and at Thr-187 by PP2A and PPP6C leads to inactivation. Deubiquitinated by USP19; leading to negative regulation of TNF-alpha- and IL-1beta-triggered NF-kappa-B activation. 'Lys-48'-linked polyubiquitination at Lys-72 is induced by TNFalpha, and leads to proteasomal degradation. Undergoes 'Lys-48'-linked polyubiquitination catalyzed by ITCH. 'Lys-63'-linked polyubiquitination at Lys-158 by TRIM8 does not lead to proteasomal degradation but contributes to autophosphorylation and activation. Deubiquitinated by CYLD, a protease that selectively cleaves 'Lys-63'-linked ubiquitin chains.

The protein resides in the cytoplasm. It localises to the cell membrane. The enzyme catalyses L-seryl-[protein] + ATP = O-phospho-L-seryl-[protein] + ADP + H(+). It catalyses the reaction L-threonyl-[protein] + ATP = O-phospho-L-threonyl-[protein] + ADP + H(+). With respect to regulation, activated by pro-inflammatory cytokines and in response to physical and chemical stresses, including osmotic stress, oxidative stress, arsenic and ultraviolet light irradiation. Activated by 'Lys-63'-linked polyubiquitination and by autophosphorylation. Association with TAB1/MAP3K7IP1 and TAB2/MAP3K7IP2 promotes activation through autophosphorylation, whereas PPM1B/PP2CB, PP2A and PPP6C dephosphorylation leads to inactivation. Ceramides are also able to activate MAP3K7/TAK1. Serine/threonine kinase which acts as an essential component of the MAP kinase signal transduction pathway. Plays an important role in the cascades of cellular responses evoked by changes in the environment. Mediates signal transduction of TRAF6, various cytokines including interleukin-1 (IL-1), transforming growth factor-beta (TGFB), TGFB-related factors like BMP2 and BMP4, toll-like receptors (TLR), tumor necrosis factor receptor CD40 and B-cell receptor (BCR). Once activated, acts as an upstream activator of the MKK/JNK signal transduction cascade and the p38 MAPK signal transduction cascade through the phosphorylation and activation of several MAP kinase kinases like MAP2K1/MEK1, MAP2K3/MKK3, MAP2K6/MKK6 and MAP2K7/MKK7. These MAP2Ks in turn activate p38 MAPKs and c-jun N-terminal kinases (JNKs); both p38 MAPK and JNK pathways control the transcription factors activator protein-1 (AP-1). Independently of MAP2Ks and p38 MAPKs, acts as a key activator of NF-kappa-B by promoting activation of the I-kappa-B-kinase (IKK) core complex. Mechanistically, recruited to polyubiquitin chains of RIPK2 and IKBKG/NEMO via TAB2/MAP3K7IP2 and TAB3/MAP3K7IP3, and catalyzes phosphorylation and activation of IKBKB/IKKB component of the IKK complex, leading to NF-kappa-B activation. In osmotic stress signaling, plays a major role in the activation of MAPK8/JNK1, but not that of NF-kappa-B. Promotes TRIM5 capsid-specific restriction activity. Phosphorylates RIPK1 at 'Ser-321' which positively regulates RIPK1 interaction with RIPK3 to promote necroptosis but negatively regulates RIPK1 kinase activity and its interaction with FADD to mediate apoptosis. Phosphorylates STING1 in response to cGAMP-activation, promoting association between STEEP1 and STING1 and STING1 translocation to COPII vesicles. This Rattus norvegicus (Rat) protein is Mitogen-activated protein kinase kinase kinase 7 (Map3k7).